The chain runs to 503 residues: ESX-5 secretion system protein EccD5 (503 aa).

The next 10 membrane-spanning stretches (helical) occupy residues valine 137 to valine 157, leucine 169 to leucine 189, valine 200 to proline 220, valine 224 to leucine 244, arginine 250 to serine 270, methionine 272 to methionine 292, phenylalanine 359 to cysteine 379, isoleucine 414 to valine 434, isoleucine 443 to proline 463, and tyrosine 480 to isoleucine 500.

It belongs to the EccD/Snm4 family. Part of the ESX-5 / type VII secretion system (T7SS), which is composed of cytosolic and membrane components. The ESX-5 membrane complex is composed of EccB5, EccC5, EccD5 and EccE5.

It is found in the cell inner membrane. Functionally, part of the ESX-5 specialized secretion system, which is responsible for the secretion of EsxN and a number of PE_PGRS and PPE proteins. This component is essential for ESX-5 complex stability and secretion. This Mycobacterium marinum (strain ATCC BAA-535 / M) protein is ESX-5 secretion system protein EccD5.